We begin with the raw amino-acid sequence, 351 residues long: Methionine import ATP-binding protein MetN (351 aa).

The 240-residue stretch at 2-241 (IVTEALTKAF…PQHAVTRAFV (240 aa)) folds into the ABC transporter domain. ATP is bound at residue 38–45 (GRSGAGKS).

This sequence belongs to the ABC transporter superfamily. Methionine importer (TC 3.A.1.24) family. As to quaternary structure, the complex is composed of two ATP-binding proteins (MetN), two transmembrane proteins (MetI) and a solute-binding protein (MetQ).

The protein localises to the cell inner membrane. It carries out the reaction L-methionine(out) + ATP + H2O = L-methionine(in) + ADP + phosphate + H(+). It catalyses the reaction D-methionine(out) + ATP + H2O = D-methionine(in) + ADP + phosphate + H(+). Part of the ABC transporter complex MetNIQ involved in methionine import. Responsible for energy coupling to the transport system. In Rhodospirillum rubrum (strain ATCC 11170 / ATH 1.1.1 / DSM 467 / LMG 4362 / NCIMB 8255 / S1), this protein is Methionine import ATP-binding protein MetN.